The primary structure comprises 596 residues: Beta-fructofuranosidase, insoluble isoenzyme 7 (596 aa).

Residues Met-1 to Ser-24 form the signal peptide. Residues Trp-51–Asp-54, Gln-70, and Trp-78 contribute to the substrate site. Asp-54 is an active-site residue. The N-linked (GlcNAc...) asparagine glycan is linked to Asn-82. Substrate contacts are provided by residues Trp-115–Ser-116, Arg-179–Asp-180, and Glu-234. The N-linked (GlcNAc...) asparagine glycan is linked to Asn-330. Residues Cys-432 and Cys-478 are joined by a disulfide bond. The N-linked (GlcNAc...) asparagine glycan is linked to Asn-552.

Belongs to the glycosyl hydrolase 32 family. Expressed in roots, leaves and flowers. Weakly expressed in seeds.

Its subcellular location is the secreted. The protein localises to the extracellular space. It is found in the apoplast. It localises to the cell wall. It carries out the reaction Hydrolysis of terminal non-reducing beta-D-fructofuranoside residues in beta-D-fructofuranosides.. Functionally, may play a role in sucrose partitioning during seed development. The sequence is that of Beta-fructofuranosidase, insoluble isoenzyme 7 (CIN7) from Oryza sativa subsp. japonica (Rice).